Reading from the N-terminus, the 168-residue chain is Cell division inhibitor SulA (168 aa).

The tract at residues 1–20 (MSTQSVSSHNIESSSFSANQ) is disordered. The segment at 105–111 (ALLTGNY) is ftsZ binding. The interval 161-168 (KIHSTLYH) is lon protease binding.

This sequence belongs to the SulA family. As to quaternary structure, interacts with FtsZ. Is rapidly cleaved and degraded by the Lon protease once DNA damage is repaired.

Component of the SOS system and an inhibitor of cell division. Accumulation of SulA causes rapid cessation of cell division and the appearance of long, non-septate filaments. In the presence of GTP, binds a polymerization-competent form of FtsZ in a 1:1 ratio, thus inhibiting FtsZ polymerization and therefore preventing it from participating in the assembly of the Z ring. This mechanism prevents the premature segregation of damaged DNA to daughter cells during cell division. This chain is Cell division inhibitor SulA, found in Pectobacterium atrosepticum (strain SCRI 1043 / ATCC BAA-672) (Erwinia carotovora subsp. atroseptica).